The chain runs to 244 residues: Small ribosomal subunit protein uS3 (244 aa).

Residues valine 39–arginine 107 enclose the KH type-2 domain. Residues valine 213–arginine 244 are disordered. A compositionally biased stretch (basic and acidic residues) spans glutamate 216–arginine 244.

It belongs to the universal ribosomal protein uS3 family. Part of the 30S ribosomal subunit. Forms a tight complex with proteins S10 and S14.

Binds the lower part of the 30S subunit head. Binds mRNA in the 70S ribosome, positioning it for translation. This Xanthomonas axonopodis pv. citri (strain 306) protein is Small ribosomal subunit protein uS3.